A 49-amino-acid polypeptide reads, in one-letter code: Large ribosomal subunit protein bL33A (49 aa).

This sequence belongs to the bacterial ribosomal protein bL33 family.

This Lactobacillus johnsonii (strain CNCM I-12250 / La1 / NCC 533) protein is Large ribosomal subunit protein bL33A.